We begin with the raw amino-acid sequence, 298 residues long: Ethanolamine ammonia-lyase small subunit (298 aa).

The tract at residues 1–19 (MDQKQIEEIVRSVMASMGQ) is targets protein to the BMC. The adenosylcob(III)alamin site is built by Val210, Glu231, and Cys261.

Belongs to the EutC family. The basic unit is a heterodimer which dimerizes to form tetramers. The heterotetramers trimerize; 6 large subunits form a core ring with 6 small subunits projecting outwards. Interacts with EutS, which targets it to the interior of the BMC. Adenosylcob(III)alamin serves as cofactor.

The protein localises to the bacterial microcompartment. The catalysed reaction is ethanolamine = acetaldehyde + NH4(+). It functions in the pathway amine and polyamine degradation; ethanolamine degradation. Catalyzes the deamination of various vicinal amino-alcohols to oxo compounds. It is spontaneously inactivated by its substrate and reactivated by EutA. May play a role in bacterial microcompartment (BMC) assembly or maintenance. Directly targeted to the BMC. In terms of biological role, expression of the eut operon allows this bacteria to use ethanolamine (EA) as a carbon, nitrogen and energy source. It relies on cobalamin (vitamin B12) both as a cofactor for the ethanolamine ammonia-lyase activity and to induce the operon. EA enhances bacterial survival in macrophages in a concentration-dependent manner, suggesting it is an important nutrient during infection. The chain is Ethanolamine ammonia-lyase small subunit from Salmonella typhimurium (strain LT2 / SGSC1412 / ATCC 700720).